We begin with the raw amino-acid sequence, 150 residues long: uncharacterized protein (150 aa).

Positions 1–28 are cleaved as a signal peptide; it reads MPLDVWIAFSYFIDFFQWLFMLNAEVMR.

This is an uncharacterized protein from Archaeoglobus fulgidus (strain ATCC 49558 / DSM 4304 / JCM 9628 / NBRC 100126 / VC-16).